A 384-amino-acid chain; its full sequence is Magnesium transporter MRS2-I (384 aa).

2 consecutive transmembrane segments (helical) span residues leucine 319–glycine 339 and tryptophan 356–alanine 376. Positions glycine 339 to asparagine 341 match the Required for magnesium transport activity motif.

It belongs to the CorA metal ion transporter (MIT) (TC 1.A.35.5) family.

The protein resides in the membrane. In terms of biological role, magnesium transporter that may mediate the influx of magnesium. The sequence is that of Magnesium transporter MRS2-I (MRS2-I) from Oryza sativa subsp. japonica (Rice).